A 128-amino-acid chain; its full sequence is Large ribosomal subunit protein bL12 (128 aa).

The protein belongs to the bacterial ribosomal protein bL12 family. Homodimer. Part of the ribosomal stalk of the 50S ribosomal subunit. Forms a multimeric L10(L12)X complex, where L10 forms an elongated spine to which 2 to 4 L12 dimers bind in a sequential fashion. Binds GTP-bound translation factors.

Forms part of the ribosomal stalk which helps the ribosome interact with GTP-bound translation factors. Is thus essential for accurate translation. The protein is Large ribosomal subunit protein bL12 of Synechococcus sp. (strain ATCC 27144 / PCC 6301 / SAUG 1402/1) (Anacystis nidulans).